The sequence spans 519 residues: DNA-directed RNA polymerase subunit Rpo2N (519 aa).

The protein belongs to the RNA polymerase beta chain family. As to quaternary structure, part of the RNA polymerase complex.

Its subcellular location is the cytoplasm. It catalyses the reaction RNA(n) + a ribonucleoside 5'-triphosphate = RNA(n+1) + diphosphate. Its function is as follows. DNA-dependent RNA polymerase (RNAP) catalyzes the transcription of DNA into RNA using the four ribonucleoside triphosphates as substrates. The Rpo2 subunit (Rpo2N and Rpo2C in this organism) is implicated in DNA promoter recognition and in nucleotide binding. This chain is DNA-directed RNA polymerase subunit Rpo2N, found in Methanothermobacter thermautotrophicus (strain ATCC 29096 / DSM 1053 / JCM 10044 / NBRC 100330 / Delta H) (Methanobacterium thermoautotrophicum).